We begin with the raw amino-acid sequence, 992 residues long: Translation initiation factor IF-2 (992 aa).

Disordered stretches follow at residues 154-173 (RRLRDEQAAQEAAREREREA) and 338-399 (AAPG…RPES). Residues 492–661 (PRAPVVTVMG…LLQAEVLELK (170 aa)) enclose the tr-type G domain. The tract at residues 501-508 (GHVDHGKT) is G1. GTP is bound at residue 501–508 (GHVDHGKT). The G2 stretch occupies residues 526 to 530 (GITQH). Positions 547-550 (DTPG) are G3. Residues 547 to 551 (DTPGH) and 601 to 604 (NKID) contribute to the GTP site. Residues 601–604 (NKID) form a G4 region. The G5 stretch occupies residues 637–639 (SAH).

The protein belongs to the TRAFAC class translation factor GTPase superfamily. Classic translation factor GTPase family. IF-2 subfamily.

Its subcellular location is the cytoplasm. In terms of biological role, one of the essential components for the initiation of protein synthesis. Protects formylmethionyl-tRNA from spontaneous hydrolysis and promotes its binding to the 30S ribosomal subunits. Also involved in the hydrolysis of GTP during the formation of the 70S ribosomal complex. This Polaromonas naphthalenivorans (strain CJ2) protein is Translation initiation factor IF-2.